The sequence spans 506 residues: Histidine ammonia-lyase (506 aa).

Positions 144–146 (ASG) form a cross-link, 5-imidazolinone (Ala-Gly). 2,3-didehydroalanine (Ser) is present on S145.

The protein belongs to the PAL/histidase family. Contains an active site 4-methylidene-imidazol-5-one (MIO), which is formed autocatalytically by cyclization and dehydration of residues Ala-Ser-Gly.

Its subcellular location is the cytoplasm. The enzyme catalyses L-histidine = trans-urocanate + NH4(+). Its pathway is amino-acid degradation; L-histidine degradation into L-glutamate; N-formimidoyl-L-glutamate from L-histidine: step 1/3. This chain is Histidine ammonia-lyase, found in Legionella pneumophila subsp. pneumophila (strain Philadelphia 1 / ATCC 33152 / DSM 7513).